The chain runs to 532 residues: CTP synthase (532 aa).

An amidoligase domain region spans residues 1–267 (MAKFIFVTGG…QDIIIEQLQL (267 aa)). Residue S13 participates in CTP binding. S13 lines the UTP pocket. 14–19 (GLGKGI) contacts ATP. Y54 is an L-glutamine binding site. D71 contributes to the ATP binding site. Residues D71 and E141 each contribute to the Mg(2+) site. Residues 148 to 150 (DIE), 188 to 193 (KTKPIQ), and K224 contribute to the CTP site. UTP contacts are provided by residues 188 to 193 (KTKPIQ) and K224. In terms of domain architecture, Glutamine amidotransferase type-1 spans 292-532 (EISFVGKYIE…FIKAIVENNK (241 aa)). G354 serves as a coordination point for L-glutamine. Residue C381 is the Nucleophile; for glutamine hydrolysis of the active site. L-glutamine-binding positions include 382–385 (LGMQ), E405, and R461. Residues H506 and E508 contribute to the active site.

Belongs to the CTP synthase family. As to quaternary structure, homotetramer.

The enzyme catalyses UTP + L-glutamine + ATP + H2O = CTP + L-glutamate + ADP + phosphate + 2 H(+). The catalysed reaction is L-glutamine + H2O = L-glutamate + NH4(+). It catalyses the reaction UTP + NH4(+) + ATP = CTP + ADP + phosphate + 2 H(+). It functions in the pathway pyrimidine metabolism; CTP biosynthesis via de novo pathway; CTP from UDP: step 2/2. Allosterically activated by GTP, when glutamine is the substrate; GTP has no effect on the reaction when ammonia is the substrate. The allosteric effector GTP functions by stabilizing the protein conformation that binds the tetrahedral intermediate(s) formed during glutamine hydrolysis. Inhibited by the product CTP, via allosteric rather than competitive inhibition. Functionally, catalyzes the ATP-dependent amination of UTP to CTP with either L-glutamine or ammonia as the source of nitrogen. Regulates intracellular CTP levels through interactions with the four ribonucleotide triphosphates. This chain is CTP synthase, found in Mycoplasma mycoides subsp. mycoides SC (strain CCUG 32753 / NCTC 10114 / PG1).